The sequence spans 66 residues: Potassium channel toxin alpha-KTx 30.1 (66 aa).

The N-terminal stretch at 1–24 is a signal peptide; that stretch reads MNTGFFFFVIMATGLVLTFDTIHA. 3 disulfide bridges follow: cysteine 30-cysteine 50, cysteine 36-cysteine 55, and cysteine 40-cysteine 57.

It belongs to the short scorpion toxin superfamily. Potassium channel inhibitor family. Alpha-KTx 30 subfamily. Expressed by the venom gland.

The protein localises to the secreted. In terms of biological role, inhibits Kv1.3/KCNA3 channel (1 uM of the toxin inhibits currents by 64.1%). The polypeptide is Potassium channel toxin alpha-KTx 30.1 (Scorpiops margerisonae (Scorpion)).